The following is a 439-amino-acid chain: ATP-dependent RNA helicase SUB2 (439 aa).

Acidic residues predominate over residues M1 to I19. Residues M1–S48 are disordered. Residues E29–N40 are compositionally biased toward polar residues. Positions T55–Q83 match the Q motif motif. Residues I86 to I261 form the Helicase ATP-binding domain. A99–T106 provides a ligand contact to ATP. The short motif at D208–D211 is the DECD box element. In terms of domain architecture, Helicase C-terminal spans G273–S434.

This sequence belongs to the DEAD box helicase family. DECD subfamily.

Its subcellular location is the nucleus. It carries out the reaction ATP + H2O = ADP + phosphate + H(+). In terms of biological role, ATP-binding RNA helicase involved in transcription elongation and required for the export of mRNA out of the nucleus. SUB2 also plays a role in pre-mRNA splicing and spliceosome assembly. May be involved in rDNA and telomeric silencing, and maintenance of genome integrity. The sequence is that of ATP-dependent RNA helicase SUB2 (SUB2) from Candida glabrata (strain ATCC 2001 / BCRC 20586 / JCM 3761 / NBRC 0622 / NRRL Y-65 / CBS 138) (Yeast).